The primary structure comprises 415 residues: Putative serine/threonine-protein phosphatase 4 regulatory subunit 1-like (415 aa).

HEAT repeat units follow at residues 86 to 124 (VMEI…SNFP), 163 to 202 (LLPR…TEKF), 203 to 241 (LIPK…RRTQ), and 242 to 280 (LFPL…RAGL). The segment covering 301-318 (FASGSPAPSSGGNTSPAS) has biased composition (low complexity). Residues 301–362 (FASGSPAPSS…GPAESPVESC (62 aa)) form a disordered region.

In terms of biological role, may be a regulatory subunit of serine/threonine-protein phosphatase 4. This Homo sapiens (Human) protein is Putative serine/threonine-protein phosphatase 4 regulatory subunit 1-like (PPP4R1L).